We begin with the raw amino-acid sequence, 338 residues long: Alcohol dehydrogenase (338 aa).

Residues Cys38, His61, Glu62, Cys92, Cys95, Cys98, Cys106, and Cys148 each contribute to the Zn(2+) site.

The protein belongs to the zinc-containing alcohol dehydrogenase family. Homotetramer. The cofactor is Zn(2+).

The catalysed reaction is a primary alcohol + NAD(+) = an aldehyde + NADH + H(+). It carries out the reaction a secondary alcohol + NAD(+) = a ketone + NADH + H(+). The enzyme catalyses ethanol + NAD(+) = acetaldehyde + NADH + H(+). It catalyses the reaction 1-propanol + NAD(+) = propanal + NADH + H(+). The catalysed reaction is butan-1-ol + NAD(+) = butanal + NADH + H(+). It carries out the reaction propan-2-ol + NAD(+) = acetone + NADH + H(+). Functionally, psychrophilic alcohol dehydrogenase that exhibits a wide range of substrate specificity, oxidizing mainly primary and secondary aliphatic alcohols, utilizing NAD(+) as a cosubstrate. In vitro, shows highest reaction rates for ethanol as a substrate and gradually decreases its reaction rates as the length and branching of the carbon chain of the alcohol substrates increase. To a lesser extent, is also able to reduce aldehydes and ketones. Do not catalyze the further oxidation of aldehydes to carboxylic acids. Cannot use NADP(+) instead of NAD(+). The protein is Alcohol dehydrogenase of Moraxella sp. (strain TAE123).